Reading from the N-terminus, the 103-residue chain is Methanol dehydrogenase [cytochrome c] subunit 2 (103 aa).

The signal sequence occupies residues 1-20 (MKRILTLTVAALALGTPALA). Cys26 and Cys32 are oxidised to a cystine.

This sequence belongs to the methanol dehydrogenase subunit 2 family. Heterotetramer composed of 2 alpha and 2 beta subunits.

The protein resides in the periplasm. It carries out the reaction 2 Fe(III)-[cytochrome cL] + a primary alcohol = 2 Fe(II)-[cytochrome cL] + an aldehyde + 2 H(+). Its function is as follows. Catalyzes the oxidation of primary alcohols including methanol. The sequence is that of Methanol dehydrogenase [cytochrome c] subunit 2 (moxI) from Paracoccus denitrificans.